Consider the following 178-residue polypeptide: Large ribosomal subunit protein uL6 (178 aa).

The protein belongs to the universal ribosomal protein uL6 family. Part of the 50S ribosomal subunit.

Its function is as follows. This protein binds to the 23S rRNA, and is important in its secondary structure. It is located near the subunit interface in the base of the L7/L12 stalk, and near the tRNA binding site of the peptidyltransferase center. The chain is Large ribosomal subunit protein uL6 from Buchnera aphidicola subsp. Acyrthosiphon pisum (strain APS) (Acyrthosiphon pisum symbiotic bacterium).